A 187-amino-acid chain; its full sequence is Large ribosomal subunit protein uL5 (187 aa).

This sequence belongs to the universal ribosomal protein uL5 family. Part of the 50S ribosomal subunit; part of the 5S rRNA/L5/L18/L25 subcomplex. Contacts the 5S rRNA and the P site tRNA. Forms a bridge to the 30S subunit in the 70S ribosome.

This is one of the proteins that bind and probably mediate the attachment of the 5S RNA into the large ribosomal subunit, where it forms part of the central protuberance. In the 70S ribosome it contacts protein S13 of the 30S subunit (bridge B1b), connecting the 2 subunits; this bridge is implicated in subunit movement. Contacts the P site tRNA; the 5S rRNA and some of its associated proteins might help stabilize positioning of ribosome-bound tRNAs. This Malacoplasma penetrans (strain HF-2) (Mycoplasma penetrans) protein is Large ribosomal subunit protein uL5.